The sequence spans 515 residues: Cytoplasmic dynein 1 light intermediate chain 1 (515 aa).

The segment covering 1–24 (MAAVGRAGSFGSSSASGAANNASA) has biased composition (low complexity). The segment at 1–34 (MAAVGRAGSFGSSSASGAANNASAELRAGGEEDD) is disordered. 64–71 (GEDGAGKT) is a binding site for ATP. 2 disordered regions span residues 370–424 (QSQL…DPNM) and 445–515 (KTGS…GEAS). Residues 397 to 409 (RTPNRSVTSNVAS) show a composition bias toward polar residues. Over residues 448 to 468 (SPGGPGGVGGSPGGGSAGGTG) the composition is skewed to gly residues. Positions 490–499 (ELDRISRKPE) are enriched in basic and acidic residues. A compositionally biased stretch (polar residues) spans 502–515 (SPTSPTSPTEGEAS).

The protein belongs to the dynein light intermediate chain family. Homodimer. The cytoplasmic dynein 1 complex consists of two catalytic heavy chains (HCs) and a number of non-catalytic subunits presented by intermediate chains (ICs). Post-translationally, phosphorylated.

Its subcellular location is the cytoplasm. The protein resides in the cytoskeleton. The protein localises to the chromosome. It localises to the centromere. It is found in the kinetochore. Its subcellular location is the spindle pole. The protein resides in the recycling endosome membrane. Acts as one of several non-catalytic accessory components of the cytoplasmic dynein 1 complex that are thought to be involved in linking dynein to cargos and to adapter proteins that regulate dynein function. Cytoplasmic dynein 1 acts as a motor for the intracellular retrograde motility of vesicles and organelles along microtubules. May play a role in binding dynein to membranous organelles or chromosomes. May regulate the movement of peripheral sorting endosomes along microtubule tracks toward the microtubule organizing center/centrosome, generating the endosomal recycling compartment. In Gallus gallus (Chicken), this protein is Cytoplasmic dynein 1 light intermediate chain 1 (DYNC1LI1).